Here is a 130-residue protein sequence, read N- to C-terminus: Small ribosomal subunit protein uS9 (130 aa).

A disordered region spans residues Arg-109–Arg-130. Basic residues predominate over residues Lys-111–Arg-130.

The protein belongs to the universal ribosomal protein uS9 family.

In Mycoplasma mobile (strain ATCC 43663 / 163K / NCTC 11711) (Mesomycoplasma mobile), this protein is Small ribosomal subunit protein uS9.